We begin with the raw amino-acid sequence, 180 residues long: Inner membrane assembly complex subunit 17 (180 aa).

Residues 1–36 (MMIRNQLYRKCIIGGGRSILNGWVINGTVPNIGLRY) constitute a mitochondrion transit peptide. The Mitochondrial matrix portion of the chain corresponds to 37 to 105 (LRSGIVTRSN…RKTQDIPIKR (69 aa)). The helical transmembrane segment at 106 to 128 (FIRPTWMFLLMSSTFYLLGHYIW) threads the bilayer. Residues 129-163 (WKLEYDEVEKELDRQVTALEEELHNLIEEHRVHGE) are a coiled coil. Over 129–180 (WKLEYDEVEKELDRQVTALEEELHNLIEEHRVHGENEAIKNKKHKHWYKFWS) the chain is Mitochondrial intermembrane.

The protein belongs to the INA17 family. Component of the inner membrane assembly (INA) complex, composed of INA17 and INA22. Interacts with a subset of F(1)F(0)-ATP synthase subunits of the F(1)-domain and the peripheral stalk.

It is found in the mitochondrion inner membrane. In terms of biological role, component of the INA complex (INAC) that promotes the biogenesis of mitochondrial F(1)F(0)-ATP synthase. INAC facilitates the assembly of the peripheral stalk and promotes the assembly of the catalytic F(1)-domain with the membrane-embedded F(0)-domain. The sequence is that of Inner membrane assembly complex subunit 17 from Vanderwaltozyma polyspora (strain ATCC 22028 / DSM 70294 / BCRC 21397 / CBS 2163 / NBRC 10782 / NRRL Y-8283 / UCD 57-17) (Kluyveromyces polysporus).